We begin with the raw amino-acid sequence, 425 residues long: E3 ubiquitin-protein ligase GW2 (425 aa).

The RING-type; degenerate zinc-finger motif lies at Cys62–Lys105.

As to expression, expressed in roots, shoots, leaves, inflorescence meristems, stamens, pistils, spikelet hulls and endosperms 4 days after fertilization.

The protein localises to the cytoplasm. It carries out the reaction S-ubiquitinyl-[E2 ubiquitin-conjugating enzyme]-L-cysteine + [acceptor protein]-L-lysine = [E2 ubiquitin-conjugating enzyme]-L-cysteine + N(6)-ubiquitinyl-[acceptor protein]-L-lysine.. The protein operates within protein modification; protein ubiquitination. Its function is as follows. E3 ubiquitin-protein ligase involved in the regulation of grain size. May limit grain width and weight by restricting cell proliferation of the spikelet hull. Possesses E3 ubiquitin-protein ligase activity in vitro. This is E3 ubiquitin-protein ligase GW2 from Oryza sativa subsp. indica (Rice).